A 423-amino-acid chain; its full sequence is Protein IQ-DOMAIN 16 (423 aa).

IQ domains are found at residues 99-127 (RHWAAIIIQTAFRGYLSRRALRALKGIVK) and 128-150 (LQALVRGNNVRNQAKLTLRCIKA). A coiled-coil region spans residues 231–251 (QKKLEIAIKREKAQALALSNQ). Positions 235-252 (EIAIKREKAQALALSNQI) are calmodulin-binding.

The protein belongs to the IQD family. As to quaternary structure, binds to multiple calmodulin (CaM) in the presence of Ca(2+) and CaM-like proteins.

Its subcellular location is the cytoplasm. The protein localises to the cytoskeleton. The protein resides in the cell membrane. In terms of biological role, may be involved in cooperative interactions with calmodulins or calmodulin-like proteins. Recruits calmodulin proteins to microtubules, thus being a potential scaffold in cellular signaling and trafficking. Regulates cell shape and elongation in aerial organs (i.e. cotyledons, leaves, and hypocotyls) probably by regulating cortical microtubules (MT) arrays orientation. May associate with nucleic acids and regulate gene expression at the transcriptional or post-transcriptional level. In Arabidopsis thaliana (Mouse-ear cress), this protein is Protein IQ-DOMAIN 16.